A 259-amino-acid chain; its full sequence is Keratinocyte-associated transmembrane protein 2 (259 aa).

A signal peptide spans 1-44 (MAASALGRMCGAAREKLSPGPGARGLGALARSLVLALLLVPVLC). Residues 45-190 (SDRSENPPNN…VKLPPPNRED (146 aa)) are Extracellular-facing. Residues 47 to 155 (RSENPPNNAT…YDWTTNPRDE (109 aa)) are disordered. A compositionally biased stretch (polar residues) spans 50 to 81 (NPPNNATVSSPVVVTAPGNHTSPSVSQISTTL). N-linked (GlcNAc...) asparagine glycosylation is found at Asn-54 and Asn-68. A compositionally biased stretch (low complexity) spans 82-104 (SPASAEKSGSSSAAPTPTAAPSA). Acidic residues predominate over residues 105–122 (PEEEADSNEDPSMEEEDL). Position 165 is a phosphoserine (Ser-165). The helical transmembrane segment at 191 to 211 (SHFFFHLLIFAFCAAVVYVTY) threads the bilayer. Residues 212–259 (HNKRKIFLLVQSRKWRDGLCSKTVEYHRLDQNVNEAMPSLKITNDYIF) lie on the Cytoplasmic side of the membrane. A phosphoserine mark is found at Ser-223 and Ser-250.

It is found in the membrane. The polypeptide is Keratinocyte-associated transmembrane protein 2 (Kct2) (Mus musculus (Mouse)).